The chain runs to 153 residues: 6,7-dimethyl-8-ribityllumazine synthase (153 aa).

Residues phenylalanine 22, 56–58 (AFE), and 80–82 (TVI) contribute to the 5-amino-6-(D-ribitylamino)uracil site. Position 85-86 (85-86 (ST)) interacts with (2S)-2-hydroxy-3-oxobutyl phosphate. Histidine 88 functions as the Proton donor in the catalytic mechanism. Phenylalanine 113 contacts 5-amino-6-(D-ribitylamino)uracil. Arginine 127 lines the (2S)-2-hydroxy-3-oxobutyl phosphate pocket.

The protein belongs to the DMRL synthase family. Forms an icosahedral capsid composed of 60 subunits, arranged as a dodecamer of pentamers.

The catalysed reaction is (2S)-2-hydroxy-3-oxobutyl phosphate + 5-amino-6-(D-ribitylamino)uracil = 6,7-dimethyl-8-(1-D-ribityl)lumazine + phosphate + 2 H2O + H(+). Its pathway is cofactor biosynthesis; riboflavin biosynthesis; riboflavin from 2-hydroxy-3-oxobutyl phosphate and 5-amino-6-(D-ribitylamino)uracil: step 1/2. Functionally, catalyzes the formation of 6,7-dimethyl-8-ribityllumazine by condensation of 5-amino-6-(D-ribitylamino)uracil with 3,4-dihydroxy-2-butanone 4-phosphate. This is the penultimate step in the biosynthesis of riboflavin. The protein is 6,7-dimethyl-8-ribityllumazine synthase of Actinobacillus pleuropneumoniae serotype 5b (strain L20).